The primary structure comprises 209 residues: Ribosomal RNA large subunit methyltransferase E (209 aa).

The S-adenosyl-L-methionine site is built by Gly-63, Trp-65, Asp-83, Asp-99, and Asp-124. Lys-164 functions as the Proton acceptor in the catalytic mechanism.

Belongs to the class I-like SAM-binding methyltransferase superfamily. RNA methyltransferase RlmE family.

It localises to the cytoplasm. It catalyses the reaction uridine(2552) in 23S rRNA + S-adenosyl-L-methionine = 2'-O-methyluridine(2552) in 23S rRNA + S-adenosyl-L-homocysteine + H(+). Its function is as follows. Specifically methylates the uridine in position 2552 of 23S rRNA at the 2'-O position of the ribose in the fully assembled 50S ribosomal subunit. The polypeptide is Ribosomal RNA large subunit methyltransferase E (Pectobacterium atrosepticum (strain SCRI 1043 / ATCC BAA-672) (Erwinia carotovora subsp. atroseptica)).